An 886-amino-acid polypeptide reads, in one-letter code: DNA mismatch repair protein MutS (886 aa).

627–634 (GPNMGGKS) contributes to the ATP binding site. The disordered stretch occupies residues 834–857 (VECADAPAPSDATHPALDRLRDID).

The protein belongs to the DNA mismatch repair MutS family.

In terms of biological role, this protein is involved in the repair of mismatches in DNA. It is possible that it carries out the mismatch recognition step. This protein has a weak ATPase activity. The chain is DNA mismatch repair protein MutS from Burkholderia vietnamiensis (strain G4 / LMG 22486) (Burkholderia cepacia (strain R1808)).